Reading from the N-terminus, the 338-residue chain is Nucleoid-associated protein CGSHiGG_07705 (338 aa).

This sequence belongs to the YejK family.

The protein resides in the cytoplasm. It is found in the nucleoid. This chain is Nucleoid-associated protein CGSHiGG_07705, found in Haemophilus influenzae (strain PittGG).